The following is a 982-amino-acid chain: Cell division cycle-associated protein 2 (982 aa).

Residues 75–87 are compositionally biased toward polar residues; that stretch reads VKTSSGKSTSSLQ. Residues 75-97 form a disordered region; that stretch reads VKTSSGKSTSSLQKARRRSTVGV. 3 positions are modified to phosphoserine: serine 100, serine 122, and serine 133. 2 disordered regions span residues 192–216 and 274–315; these read SGFP…NYLS and TPLS…CGSS. 2 stretches are compositionally biased toward polar residues: residues 207 to 216 and 275 to 315; these read SQDSPDNYLS and PLSS…CGSS. 3 positions are modified to phosphoserine: serine 286, serine 296, and serine 306. Threonine 309 is subject to Phosphothreonine. The PP1-binding domain maps to 379 to 436; sequence KRKRVTFGEDLSPEVFDESLPANTPLCKGGTPVRPRTVKTTSPLQSPVHEQFLQPNFD. Residues serine 390 and serine 397 each carry the phosphoserine modification. Disordered stretches follow at residues 400–473, 489–545, 568–638, and 651–716; these read ANTP…NTCS, TRTS…KSYR, KPLL…QSQV, and ASER…PQSQ. Threonine 402 carries the post-translational modification Phosphothreonine. Serine 424 is modified (phosphoserine). Polar residues-rich tracts occupy residues 451 to 473 and 498 to 512; these read SFAN…NTCS and TLSS…TTQA. Basic residues predominate over residues 518 to 545; sequence KMSRRKSREKKHTSAALPKKKQVLKSYR. 2 positions are modified to phosphoserine: serine 572 and serine 595. Polar residues predominate over residues 651–668; sequence ASERGPNASTRDTGSEGN. The segment covering 669 to 685 has biased composition (basic and acidic residues); sequence TRAESKCQSAKEPKPGT. At serine 735 the chain carries Phosphoserine. Residue lysine 741 forms a Glycyl lysine isopeptide (Lys-Gly) (interchain with G-Cter in SUMO2) linkage. The tract at residues 910–982 is disordered; the sequence is ECPSSKEETI…SLKGESAQLP (73 aa). Serine 913 is modified (phosphoserine). Low complexity predominate over residues 931 to 942; that stretch reads VSGSESQGVGSS. The residue at position 950 (serine 950) is a Phosphoserine. Polar residues predominate over residues 952–964; sequence CGSTLTDANSATQ. A Phosphoserine modification is found at serine 973.

In terms of assembly, interacts with PPP1CC. Phosphorylated by CDK1. May regulate its subcellular location.

It localises to the nucleus. Functionally, regulator of chromosome structure during mitosis required for condensin-depleted chromosomes to retain their compact architecture through anaphase. Acts by mediating the recruitment of phopsphatase PP1-gamma subunit (PPP1CC) to chromatin at anaphase and into the following interphase. At anaphase onset, its association with chromatin targets a pool of PPP1CC to dephosphorylate substrates. The protein is Cell division cycle-associated protein 2 (Cdca2) of Mus musculus (Mouse).